The following is a 342-amino-acid chain: UDP-glucuronic acid decarboxylase 3 (342 aa).

Positions Met1–Thr11 are enriched in polar residues. Positions Met1–Asn22 are disordered. Residue Asp61–Asp86 coordinates NAD(+). Arg170 lines the substrate pocket. The active-site Proton acceptor is the Tyr173. Tyr173–Lys177 contacts NAD(+). Substrate is bound at residue Asn202. Position 214 (Arg214) interacts with NAD(+). Substrate contacts are provided by residues Val215–Phe219, Gln232–Arg239, and Asp299–Arg303.

The protein belongs to the NAD(P)-dependent epimerase/dehydratase family. UDP-glucuronic acid decarboxylase subfamily. NAD(+) is required as a cofactor. In terms of tissue distribution, ubiquitous.

The protein localises to the cytoplasm. It carries out the reaction UDP-alpha-D-glucuronate + H(+) = UDP-alpha-D-xylose + CO2. Its pathway is nucleotide-sugar biosynthesis; UDP-alpha-D-xylose biosynthesis; UDP-alpha-D-xylose from UDP-alpha-D-glucuronate: step 1/1. In terms of biological role, catalyzes the NAD-dependent decarboxylation of UDP-glucuronic acid to UDP-xylose. Necessary for the biosynthesis of the core tetrasaccharide in glycosaminoglycan biosynthesis. In Arabidopsis thaliana (Mouse-ear cress), this protein is UDP-glucuronic acid decarboxylase 3 (UXS3).